The following is a 328-amino-acid chain: DNA-directed RNA polymerase subunit alpha (328 aa).

The alpha N-terminal domain (alpha-NTD) stretch occupies residues 1–231; sequence MIYQMQMPAK…EHVAFFADFS (231 aa). The tract at residues 252 to 328 is alpha C-terminal domain (alpha-CTD); sequence MRKLLNTKIE…MDITKYQMKG (77 aa).

This sequence belongs to the RNA polymerase alpha chain family. Homodimer. The RNAP catalytic core consists of 2 alpha, 1 beta, 1 beta' and 1 omega subunit. When a sigma factor is associated with the core the holoenzyme is formed, which can initiate transcription.

The enzyme catalyses RNA(n) + a ribonucleoside 5'-triphosphate = RNA(n+1) + diphosphate. Functionally, DNA-dependent RNA polymerase catalyzes the transcription of DNA into RNA using the four ribonucleoside triphosphates as substrates. The polypeptide is DNA-directed RNA polymerase subunit alpha (Chlorobium phaeovibrioides (strain DSM 265 / 1930) (Prosthecochloris vibrioformis (strain DSM 265))).